Reading from the N-terminus, the 211-residue chain is ATP phosphoribosyltransferase (211 aa).

This sequence belongs to the ATP phosphoribosyltransferase family. Short subfamily. As to quaternary structure, heteromultimer composed of HisG and HisZ subunits.

It is found in the cytoplasm. It carries out the reaction 1-(5-phospho-beta-D-ribosyl)-ATP + diphosphate = 5-phospho-alpha-D-ribose 1-diphosphate + ATP. It participates in amino-acid biosynthesis; L-histidine biosynthesis; L-histidine from 5-phospho-alpha-D-ribose 1-diphosphate: step 1/9. Its function is as follows. Catalyzes the condensation of ATP and 5-phosphoribose 1-diphosphate to form N'-(5'-phosphoribosyl)-ATP (PR-ATP). Has a crucial role in the pathway because the rate of histidine biosynthesis seems to be controlled primarily by regulation of HisG enzymatic activity. This is ATP phosphoribosyltransferase from Pseudomonas putida (strain GB-1).